The sequence spans 497 residues: Probable cytosol aminopeptidase (497 aa).

Positions 267 and 272 each coordinate Mn(2+). The active site involves K279. Mn(2+) is bound by residues D290, D349, and E351. Residue R353 is part of the active site.

Belongs to the peptidase M17 family. Mn(2+) serves as cofactor.

It localises to the cytoplasm. It carries out the reaction Release of an N-terminal amino acid, Xaa-|-Yaa-, in which Xaa is preferably Leu, but may be other amino acids including Pro although not Arg or Lys, and Yaa may be Pro. Amino acid amides and methyl esters are also readily hydrolyzed, but rates on arylamides are exceedingly low.. The enzyme catalyses Release of an N-terminal amino acid, preferentially leucine, but not glutamic or aspartic acids.. Its function is as follows. Presumably involved in the processing and regular turnover of intracellular proteins. Catalyzes the removal of unsubstituted N-terminal amino acids from various peptides. The protein is Probable cytosol aminopeptidase of Pseudomonas putida (strain GB-1).